Reading from the N-terminus, the 446-residue chain is BAG family molecular chaperone regulator 7 (446 aa).

The segment at 230–252 (TGGEKKKKHEEKEKKEKIETKSK) is disordered. A compositionally biased stretch (basic and acidic residues) spans 239-250 (EEKEKKEKIETK). Residues 303-332 (PEYAAVMIQRAFKAYLIRRSKSLRALRDLA) enclose the IQ domain. In terms of domain architecture, BAG spans 330–407 (DLAIAKTKLK…AMLDVVDPQP (78 aa)). Phosphothreonine is present on Thr-443.

Binds to the ATPase domain of HSP70/HSC70 chaperones. Interacts with HSP70-11/BIP2.

The protein localises to the endoplasmic reticulum. Functionally, co-chaperone that regulates diverse cellular pathways, such as programmed cell death and stress responses. Necessary for the proper maintenance of the unfolded protein response (UPR) during heat and cold tolerance. This Arabidopsis thaliana (Mouse-ear cress) protein is BAG family molecular chaperone regulator 7 (BAG7).